Reading from the N-terminus, the 221-residue chain is UPF0502 protein PSPTO_2686 (221 aa).

This sequence belongs to the UPF0502 family.

The polypeptide is UPF0502 protein PSPTO_2686 (Pseudomonas syringae pv. tomato (strain ATCC BAA-871 / DC3000)).